Reading from the N-terminus, the 77-residue chain is Apelin (77 aa).

Residues 1–22 form the signal peptide; the sequence is MNLSFCVQALLLLWLSLTAVCG. Residues 23 to 41 constitute a propeptide that is removed on maturation; the sequence is VPLMLPPDGKGLEEGNMRY. The interval 45 to 77 is disordered; sequence PRTSRTGPGAWQGGRRKFRRQRPRLSHKGPMPF. Over residues 58-71 the composition is skewed to basic residues; it reads GRRKFRRQRPRLSH.

This sequence belongs to the apelin family. Post-translationally, several active peptides may be produced by proteolytic processing of the peptide precursor. Expressed in the lung, testis, ovary, uterus and mammary gland. Expressed in neurons in the thalamic paraventricular and hypothalamic supraoptic nuclei. The lung, testis and uterus mainly contain a large form that looks like apelin-36, whereas the mammary gland seems to contain 2 forms of apelin, a large form close to apelin-36 and a small form close to apelin-13 (at protein level). Widely expressed in the adult, with highest levels in the mammary gland of lactating animals, very high levels in the lung, intermediate levels in the spinal cord, ovary, adipose tissue, brain (neuronal cell bodies and fibers in the supraoptic and the paraventricular nuclei), heart and testis, and lowest levels in the pituitary gland, kidney, stomach, uterus and pancreas.

The protein localises to the secreted. It is found in the extracellular space. Its function is as follows. Peptide hormone that functions as endogenous ligand for the G-protein-coupled apelin receptor (APLNR/APJ), that plays a role in cadiovascular homeostasis. Functions as a balanced agonist activating both G(i) protein pathway and beta-arrestin pathway of APLNR. Downstream G proteins activation, apelin can inhibit cAMP production and activate key intracellular effectors such as ERKs. On the other hand, APLNR activation induces beta-arrestin recruitment to the membrane leading to desensitization and internalization of the receptor. Apelin blunts cardiac hypertrophic induction from APLNR on response to pathological stimuli, but also induces myocardial hypertrophy under normal conditions. Apelin-36 dissociates more hardly than (pyroglu)apelin-13 from APLNR. Involved in the regulation of cardiac precursor cell movements during gastrulation and heart morphogenesis. Has an inhibitory effect on cytokine production in response to T-cell receptor/CD3 cross-linking; the oral intake of apelin in the colostrum and the milk might therefore modulate immune responses in neonates. Plays a role in early coronary blood vessels formation. Mediates myocardial contractility in an ERK1/2-dependent manner. May also have a role in the central control of body fluid homeostasis by influencing vasopressin release and drinking behavior. This Rattus norvegicus (Rat) protein is Apelin.